The chain runs to 264 residues: Thymidylate synthase (264 aa).

DUMP is bound at residue Arg21. Residue His51 coordinates (6R)-5,10-methylene-5,6,7,8-tetrahydrofolate. Arg126–Arg127 contributes to the dUMP binding site. The Nucleophile role is filled by Cys146. Residues Arg166 to Asp169, Asn177, and His207 to Tyr209 each bind dUMP. Asp169 provides a ligand contact to (6R)-5,10-methylene-5,6,7,8-tetrahydrofolate. Ala263 is a (6R)-5,10-methylene-5,6,7,8-tetrahydrofolate binding site.

The protein belongs to the thymidylate synthase family. Bacterial-type ThyA subfamily. In terms of assembly, homodimer.

The protein resides in the cytoplasm. It catalyses the reaction dUMP + (6R)-5,10-methylene-5,6,7,8-tetrahydrofolate = 7,8-dihydrofolate + dTMP. Its pathway is pyrimidine metabolism; dTTP biosynthesis. Functionally, catalyzes the reductive methylation of 2'-deoxyuridine-5'-monophosphate (dUMP) to 2'-deoxythymidine-5'-monophosphate (dTMP) while utilizing 5,10-methylenetetrahydrofolate (mTHF) as the methyl donor and reductant in the reaction, yielding dihydrofolate (DHF) as a by-product. This enzymatic reaction provides an intracellular de novo source of dTMP, an essential precursor for DNA biosynthesis. The polypeptide is Thymidylate synthase (Allorhizobium ampelinum (strain ATCC BAA-846 / DSM 112012 / S4) (Agrobacterium vitis (strain S4))).